A 310-amino-acid chain; its full sequence is Ribosomal RNA small subunit methyltransferase H (310 aa).

Residues 35 to 37 (GGH), Asp-52, Phe-79, Asp-100, and Gln-107 contribute to the S-adenosyl-L-methionine site.

This sequence belongs to the methyltransferase superfamily. RsmH family.

It localises to the cytoplasm. It carries out the reaction cytidine(1402) in 16S rRNA + S-adenosyl-L-methionine = N(4)-methylcytidine(1402) in 16S rRNA + S-adenosyl-L-homocysteine + H(+). Specifically methylates the N4 position of cytidine in position 1402 (C1402) of 16S rRNA. The chain is Ribosomal RNA small subunit methyltransferase H from Anaeromyxobacter sp. (strain Fw109-5).